Here is a 199-residue protein sequence, read N- to C-terminus: Large ribosomal subunit protein eL13B (199 aa).

Threonine 144 and threonine 152 each carry phosphothreonine.

Belongs to the eukaryotic ribosomal protein eL13 family. In terms of assembly, component of the large ribosomal subunit (LSU). Mature yeast ribosomes consist of a small (40S) and a large (60S) subunit. The 40S small subunit contains 1 molecule of ribosomal RNA (18S rRNA) and 33 different proteins (encoded by 57 genes). The large 60S subunit contains 3 rRNA molecules (25S, 5.8S and 5S rRNA) and 46 different proteins (encoded by 81 genes).

The protein resides in the cytoplasm. Component of the ribosome, a large ribonucleoprotein complex responsible for the synthesis of proteins in the cell. The small ribosomal subunit (SSU) binds messenger RNAs (mRNAs) and translates the encoded message by selecting cognate aminoacyl-transfer RNA (tRNA) molecules. The large subunit (LSU) contains the ribosomal catalytic site termed the peptidyl transferase center (PTC), which catalyzes the formation of peptide bonds, thereby polymerizing the amino acids delivered by tRNAs into a polypeptide chain. The nascent polypeptides leave the ribosome through a tunnel in the LSU and interact with protein factors that function in enzymatic processing, targeting, and the membrane insertion of nascent chains at the exit of the ribosomal tunnel. The polypeptide is Large ribosomal subunit protein eL13B (Saccharomyces cerevisiae (strain ATCC 204508 / S288c) (Baker's yeast)).